A 671-amino-acid polypeptide reads, in one-letter code: K(+)-insensitive pyrophosphate-energized proton pump (671 aa).

5 helical membrane-spanning segments follow: residues 4–24, 57–77, 79–99, 128–148, and 156–176; these read LIFTAPLAGLISLTFAAFFAK, TIAVVSVIISLLILFLLDEGL, IAAGFLAGAISSAAAGYIGMS, AVTGLAVIGLALLGTSSLYIL, and VGFGFGASLISLFARAGGGIF. K178 serves as a coordination point for substrate. Mg(2+) contacts are provided by D181, D185, N208, and D211. Transmembrane regions (helical) follow at residues 223-243, 249-269, 285-305, 310-330, 365-385, and 393-413; these read LFETYVVTSLAAMLLGSLIIG, VLYPLMLGSAAIFASIISVFF, GVGGSTVLSLIAFYYITGFLM, FFYVTVAGVVITVLMVIVTEY, TLVPAVVIAAGILVSYFIVGG, and LYGIAIASVAMLSTAGMIVAL. Residue D421 participates in Mg(2+) binding. 4 helical membrane-spanning segments follow: residues 452-472, 490-510, 558-578, and 579-599; these read AVTKGYAIGSTALGALALFAD, VVLSGILLGAVLPFLFSAVMM, MAMPGFLAVIIPLLTGFFLGP, and EALAGLLTGLIVVGFMLALMM. Residues D607, D633, and D637 each contribute to the Ca(2+) site. Position 640 (K640) interacts with substrate. Residues 650–670 traverse the membrane as a helical segment; that stretch reads LIKVVNMVAILFSPLIIGGGF.

The protein belongs to the H(+)-translocating pyrophosphatase (TC 3.A.10) family. K(+)-insensitive subfamily. As to quaternary structure, homodimer. Requires Mg(2+) as cofactor.

The protein localises to the cell membrane. It catalyses the reaction diphosphate + H2O + H(+)(in) = 2 phosphate + 2 H(+)(out). Its function is as follows. Proton pump that utilizes the energy of pyrophosphate hydrolysis as the driving force for proton movement across the membrane. Generates a proton motive force. The protein is K(+)-insensitive pyrophosphate-energized proton pump of Methanosarcina mazei (strain ATCC BAA-159 / DSM 3647 / Goe1 / Go1 / JCM 11833 / OCM 88) (Methanosarcina frisia).